A 398-amino-acid polypeptide reads, in one-letter code: Probable aminomethyltransferase (398 aa).

The protein belongs to the GcvT family. As to quaternary structure, the glycine cleavage system is composed of four proteins: P, T, L and H.

The catalysed reaction is N(6)-[(R)-S(8)-aminomethyldihydrolipoyl]-L-lysyl-[protein] + (6S)-5,6,7,8-tetrahydrofolate = N(6)-[(R)-dihydrolipoyl]-L-lysyl-[protein] + (6R)-5,10-methylene-5,6,7,8-tetrahydrofolate + NH4(+). Its function is as follows. The glycine cleavage system catalyzes the degradation of glycine. This Pyrococcus abyssi (strain GE5 / Orsay) protein is Probable aminomethyltransferase.